The primary structure comprises 479 residues: Aspartyl/glutamyl-tRNA(Asn/Gln) amidotransferase subunit B (479 aa).

It belongs to the GatB/GatE family. GatB subfamily. As to quaternary structure, heterotrimer of A, B and C subunits.

It carries out the reaction L-glutamyl-tRNA(Gln) + L-glutamine + ATP + H2O = L-glutaminyl-tRNA(Gln) + L-glutamate + ADP + phosphate + H(+). The enzyme catalyses L-aspartyl-tRNA(Asn) + L-glutamine + ATP + H2O = L-asparaginyl-tRNA(Asn) + L-glutamate + ADP + phosphate + 2 H(+). Its function is as follows. Allows the formation of correctly charged Asn-tRNA(Asn) or Gln-tRNA(Gln) through the transamidation of misacylated Asp-tRNA(Asn) or Glu-tRNA(Gln) in organisms which lack either or both of asparaginyl-tRNA or glutaminyl-tRNA synthetases. The reaction takes place in the presence of glutamine and ATP through an activated phospho-Asp-tRNA(Asn) or phospho-Glu-tRNA(Gln). The chain is Aspartyl/glutamyl-tRNA(Asn/Gln) amidotransferase subunit B from Mycoplasma capricolum subsp. capricolum (strain California kid / ATCC 27343 / NCTC 10154).